The sequence spans 2153 residues: RNA-directed RNA polymerase L (2153 aa).

5 residues coordinate Mn(2+): His-36, Glu-54, Asp-97, Glu-110, and Val-111. Lys-124 serves as the catalytic For endonuclease activity. In terms of domain architecture, RdRp catalytic spans 957–1143; the sequence is TGKSIKFKRK…AINQEMWKSM (187 aa). Asp-1100 is a Mg(2+) binding site.

It belongs to the Bunyavirales RNA polymerase family. As to quaternary structure, interacts with the viral nucleoprotein. The cofactor is Mn(2+). Mg(2+) is required as a cofactor.

It is found in the host cytoplasm. Its subcellular location is the host perinuclear region. It catalyses the reaction RNA(n) + a ribonucleoside 5'-triphosphate = RNA(n+1) + diphosphate. Functionally, RNA-dependent RNA polymerase, which is responsible for the replication and transcription of the viral RNA genome using antigenomic RNA as an intermediate. During transcription, synthesizes subgenomic RNAs and assures their capping by a cap-snatching mechanism, which involves the endonuclease activity cleaving the host capped pre-mRNAs. These short capped RNAs are then used as primers for viral transcription. Cleaves ssRNA substrates but not DNA. Seems to downregulate the expression of its own and heterologous mRNAs through its endonuclease activity. The sequence is that of RNA-directed RNA polymerase L from Abrothrix longipilis (Long-haired grass mouse).